Here is a 129-residue protein sequence, read N- to C-terminus: Small ribosomal subunit protein uS9 (129 aa).

This sequence belongs to the universal ribosomal protein uS9 family.

This is Small ribosomal subunit protein uS9 from Helicobacter hepaticus (strain ATCC 51449 / 3B1).